The following is a 435-amino-acid chain: Nuclear distribution protein nudF 2 (435 aa).

The region spanning 9–41 (QAEELHKSIIAYLSANGLPETTAILRKELGVTE) is the LisH domain. WD repeat units follow at residues 86–125 (SHRD…LEVT), 128–171 (GHTR…KNIR), 175–214 (GHDH…CVKT), 217–256 (GHTG…ENKL), 280–320 (APLA…LMTL), 322–361 (GHDN…KCVK), 366–396 (THGG…VRQI), and 397–434 (PDVA…QIFA).

It belongs to the WD repeat LIS1/nudF family. Self-associates. Interacts with nudE and dynein.

The protein localises to the cytoplasm. Its subcellular location is the cytoskeleton. The protein resides in the spindle pole. Its function is as follows. Positively regulates the activity of the minus-end directed microtubule motor protein dynein. May enhance dynein-mediated microtubule sliding by targeting dynein to the microtubule plus end. Required for nuclear migration during vegetative growth as well as development. Required for retrograde early endosome (EE) transport from the hyphal tip. Required for localization of dynein to the mitotic spindle poles. Recruits additional proteins to the dynein complex at SPBs. In Aspergillus clavatus (strain ATCC 1007 / CBS 513.65 / DSM 816 / NCTC 3887 / NRRL 1 / QM 1276 / 107), this protein is Nuclear distribution protein nudF 2.